The primary structure comprises 341 residues: Guanine nucleotide-binding protein subunit beta (341 aa).

WD repeat units lie at residues 54–93, 96–135, 142–180, 183–222, 225–264, 269–308, and 311–341; these read GHLAKIYAMHWASDSRNLVSASQDGKLIVWDGYTTNKVHA, LRSSWVMTCAYAPSGSYVACGGLDNICSIYSLKTREGNVR, GHTGYLSCCRFLDDNQIVTSSGDMSCALWDIETGQQTTA, GHTGDVMSLSLSPDMRTFVSGACDASAKLWDIRDGMCKQT, GHESDINAITYFPNGYAFATGSDDATCRLFDIRADQEIGM, NIICGITSVAFSKSGRLLLGGYDDFNCNVWDVLRQERAGV, and GHDNRVSCLGVTEDGMAVATGSWDSFLRIWN.

The protein belongs to the WD repeat G protein beta family. As to quaternary structure, g proteins are composed of 3 units, alpha, beta and gamma. The G protein beta1-gamma2 dimer interacts with calmodulin. In terms of tissue distribution, abundantly expressed in gills, gonad and mantle and at lower levels in digestion gland. Not detected in muscle.

It localises to the cytoplasm. In terms of biological role, guanine nucleotide-binding proteins (G proteins) are involved as a modulator or transducer in various transmembrane signaling systems. The beta and gamma chains are required for the GTPase activity, for replacement of GDP by GTP, and for G protein-effector interaction. The polypeptide is Guanine nucleotide-binding protein subunit beta (Pinctada fucata (Akoya pearl oyster)).